Consider the following 748-residue polypeptide: Long-chain-alcohol oxidase FAO4B (748 aa).

The segment covering 1–18 (MEDVRRRNRGHPLLRSKK) has biased composition (basic residues). Residues 1-25 (MEDVRRRNRGHPLLRSKKRGEGYNH) are disordered. The next 2 membrane-spanning stretches (helical) occupy residues 89-109 (IILM…SLCL) and 140-160 (FLLP…FYFF). Position 238–253 (238–253 (CDAVVVGSGSGGGVAA)) interacts with FAD. His-679 (proton acceptor) is an active-site residue.

It belongs to the GMC oxidoreductase family.

The protein localises to the membrane. The catalysed reaction is a long-chain primary fatty alcohol + O2 = a long-chain fatty aldehyde + H2O2. Its function is as follows. Long-chain fatty alcohol oxidase involved in the omega-oxidation pathway of lipid degradation. This is Long-chain-alcohol oxidase FAO4B (FAO4B) from Arabidopsis thaliana (Mouse-ear cress).